Here is a 172-residue protein sequence, read N- to C-terminus: MLSSLGNPRQAATQLLNFALILSTAFMMWKGLSVATDSPSPIVVVLSGSMEPAFQRGDLLFLWNRNIVQETDVGEIVVYNVKGKDIPIVHRIVRKFGAGPKAKLLTKGDNNAADDTELYAKDQDYLERKDIIGSVVAYIPFVGYVTIMLSEHPWMKTAMLGIMGLMVVLQRE.

Over 1–14 (MLSSLGNPRQAATQ) the chain is Cytoplasmic. Residues 15-35 (LLNFALILSTAFMMWKGLSVA) form a helical; Signal-anchor for type II membrane protein membrane-spanning segment. Residues 36–172 (TDSPSPIVVV…MGLMVVLQRE (137 aa)) lie on the Lumenal side of the membrane. Catalysis depends on charge relay system residues S49, H90, and D115. Residues 158 to 169 (AMLGIMGLMVVL) are C-terminal short (CTS) helix.

It belongs to the peptidase S26B family. Component of the signal peptidase complex (SPC) composed of a catalytic subunit SEC11 and three accessory subunits SPC1, SPC2 and SPC3. The complex induces a local thinning of the ER membrane which is used to measure the length of the signal peptide (SP) h-region of protein substrates. This ensures the selectivity of the complex towards h-regions shorter than 18-20 amino acids. SPC associates with the translocon complex.

The protein resides in the endoplasmic reticulum membrane. The enzyme catalyses Cleavage of hydrophobic, N-terminal signal or leader sequences from secreted and periplasmic proteins.. In terms of biological role, catalytic component of the signal peptidase complex (SPC) which catalyzes the cleavage of N-terminal signal sequences from nascent proteins as they are translocated into the lumen of the endoplasmic reticulum. Specifically cleaves N-terminal signal peptides that contain a hydrophobic alpha-helix (h-region) shorter than 18-20 amino acids. The chain is Signal peptidase complex catalytic subunit SEC11 (SEC11) from Pyricularia oryzae (strain 70-15 / ATCC MYA-4617 / FGSC 8958) (Rice blast fungus).